Here is a 377-residue protein sequence, read N- to C-terminus: 3-dehydroquinate synthase (377 aa).

Residues 115-119 (GVIGD), 139-140 (TS), K152, and K161 each bind NAD(+). E194, H256, and H275 together coordinate Zn(2+).

This sequence belongs to the sugar phosphate cyclases superfamily. Dehydroquinate synthase family. Co(2+) serves as cofactor. Requires Zn(2+) as cofactor. NAD(+) is required as a cofactor.

The protein resides in the cytoplasm. It carries out the reaction 7-phospho-2-dehydro-3-deoxy-D-arabino-heptonate = 3-dehydroquinate + phosphate. It functions in the pathway metabolic intermediate biosynthesis; chorismate biosynthesis; chorismate from D-erythrose 4-phosphate and phosphoenolpyruvate: step 2/7. Functionally, catalyzes the conversion of 3-deoxy-D-arabino-heptulosonate 7-phosphate (DAHP) to dehydroquinate (DHQ). The polypeptide is 3-dehydroquinate synthase (Rhizobium rhizogenes (strain K84 / ATCC BAA-868) (Agrobacterium radiobacter)).